We begin with the raw amino-acid sequence, 226 residues long: Charged multivesicular body protein 5 (226 aa).

Residues 21–93 (IAGVDARATN…NQSFNMEQAN (73 aa)) are a coiled coil. Positions 188–198 (KAPEAPSREPG) are enriched in basic and acidic residues. A disordered region spans residues 188–226 (KAPEAPSREPGADSIVPGKSTIETDEFGLPKIPTSLKTT). Position 201 is a phosphoserine (S201). A Phosphothreonine modification is found at T226.

Belongs to the SNF7 family. As to quaternary structure, probable peripherally associated component of the endosomal sorting required for transport complex III (ESCRT-III).

It is found in the endosome membrane. Functionally, probable peripherally associated component of the endosomal sorting required for transport complex III (ESCRT-III) which is involved in multivesicular bodies (MVBs) formation and sorting of endosomal cargo proteins into MVBs. MVBs contain intraluminal vesicles (ILVs) that are generated by invagination and scission from the limiting membrane of the endosome and are delivered to lysosomes enabling degradation of membrane proteins. Specifically down-regulates Notch signaling activity in the germarium, probably by facilitating Notch endocytosis. The chain is Charged multivesicular body protein 5 from Drosophila melanogaster (Fruit fly).